The following is a 391-amino-acid chain: Multidrug resistance protein MdtL (391 aa).

Transmembrane regions (helical) follow at residues 4-24 (FLIC…MYLV), 42-62 (IAFS…GKVA), 69-89 (PVAI…SLAE), 93-113 (LFLA…VVAF), 131-151 (LLNG…HLIM), 158-178 (SLFW…LFIL), 203-222 (FFLS…LTFV), 245-265 (ALTA…LGIF), 269-289 (TLMI…AVSP), 293-313 (VSLF…GVAM), 331-351 (LGIA…VVGI), and 356-376 (MLIG…MFVA).

This sequence belongs to the major facilitator superfamily. DHA1 family. MdtL (TC 2.A.1.2.22) subfamily.

It is found in the cell inner membrane. Its function is as follows. Confers resistance to chloramphenicol. This is Multidrug resistance protein MdtL from Escherichia coli (strain 55989 / EAEC).